A 265-amino-acid chain; its full sequence is HUWE1-associated protein modifying stress responses (265 aa).

Disordered regions lie at residues 1-22 (MEDK…HWFS), 145-170 (RNSR…GSSV), 195-218 (VRSS…RRNG), and 240-265 (GTRK…NRMI). Polar residues-rich tracts occupy residues 156–170 (VSPN…GSSV) and 195–212 (VRSS…SSNT).

This sequence belongs to the HAPSTR1 family. As to quaternary structure, oligomer.

It is found in the nucleus. The protein localises to the cytoplasm. In terms of biological role, acts as a central player within a network of stress response pathways promoting cellular adaptability. Functions as a negative regulator of TP53/P53 in the cellular response to telomere erosion and probably also DNA damage. The protein is HUWE1-associated protein modifying stress responses of Xenopus tropicalis (Western clawed frog).